We begin with the raw amino-acid sequence, 545 residues long: Calcium-binding mitochondrial carrier SAL1 (545 aa).

Residues 11-46 enclose the EF-hand 1 domain; the sequence is QRDIRYACLFKELDVKGNGQVTLDNLISAFEKNDHP. Positions 65, 70, 93, 95, 97, 99, and 104 each coordinate Ca(2+). EF-hand domains follow at residues 80-115, 120-155, and 156-191; these read NAESQIWNGFQRIDLDHDGKIGINEINRYLSDLDNQ, NELNHELSNEKMNKFSRFFEWAFPKRKANIALRGQA, and SHKKNTDNDRSKKTTDSDLYVTYDQWRDFLLLVPRK. Thr161 and Ser166 together coordinate Ca(2+). Solcar repeat units lie at residues 225 to 332, 345 to 434, and 452 to 541; these read IRGF…TKKI, LSKF…LKKW, and LSNL…LKKF. Transmembrane regions (helical) follow at residues 231 to 248, 307 to 326, 355 to 368, 409 to 428, 458 to 475, and 516 to 535; these read FIAGGISGVISRTCTAPF, GNGLNVIKVFPESSIKFGSF, GLAGMAAQFSVYPI, GVTVGIVGIFPYAALDLGTF, LPMGAFSGTVGASVVYPI, and GLVPTLAKVCPAVSISYLCY.

The protein belongs to the mitochondrial carrier (TC 2.A.29) family.

It is found in the mitochondrion inner membrane. Functionally, calcium-dependent mitochondrial solute carrier. The polypeptide is Calcium-binding mitochondrial carrier SAL1 (SAL1) (Saccharomyces cerevisiae (Baker's yeast)).